Here is a 378-residue protein sequence, read N- to C-terminus: Putative methyltransferase spot-1 (378 aa).

This sequence belongs to the class IV-like SAM-binding methyltransferase superfamily.

The protein resides in the cytoplasm. The protein localises to the cytoskeleton. It is found in the spindle. It localises to the chromosome. Its subcellular location is the centromere. The protein resides in the kinetochore. The protein localises to the microtubule organizing center. It is found in the centrosome. Its function is as follows. Required for association of the centrosomes with the poles of the bipolar mitotic spindle during metaphase. In Caenorhabditis elegans, this protein is Putative methyltransferase spot-1.